Reading from the N-terminus, the 479-residue chain is Aspartyl/glutamyl-tRNA(Asn/Gln) amidotransferase subunit B (479 aa).

It belongs to the GatB/GatE family. GatB subfamily. As to quaternary structure, heterotrimer of A, B and C subunits.

The enzyme catalyses L-glutamyl-tRNA(Gln) + L-glutamine + ATP + H2O = L-glutaminyl-tRNA(Gln) + L-glutamate + ADP + phosphate + H(+). It catalyses the reaction L-aspartyl-tRNA(Asn) + L-glutamine + ATP + H2O = L-asparaginyl-tRNA(Asn) + L-glutamate + ADP + phosphate + 2 H(+). Functionally, allows the formation of correctly charged Asn-tRNA(Asn) or Gln-tRNA(Gln) through the transamidation of misacylated Asp-tRNA(Asn) or Glu-tRNA(Gln) in organisms which lack either or both of asparaginyl-tRNA or glutaminyl-tRNA synthetases. The reaction takes place in the presence of glutamine and ATP through an activated phospho-Asp-tRNA(Asn) or phospho-Glu-tRNA(Gln). The polypeptide is Aspartyl/glutamyl-tRNA(Asn/Gln) amidotransferase subunit B (Streptococcus pyogenes serotype M3 (strain ATCC BAA-595 / MGAS315)).